The sequence spans 224 residues: MKHLDRLQHKIGYEFSNLTLLKQALTHRSAAKVHNERLEFLGDAILNLTIGEALYLQFPHCNEGELSRMRATLVREKTLAELAHQFDLGNYMALGAGELKSGGFRRASILADCVEAIIGAMSLDSNLPKTMEIVRRWYEVLLRDIQPGENQKDPKTRLQEYLQGKRLALPAYNVTDIQGEAHCQTFTVECHVENLDRTFVGVAGSRRKAEQVAAEQILKVLDIK.

The 123-residue stretch at 4-126 (LDRLQHKIGY…IIGAMSLDSN (123 aa)) folds into the RNase III domain. Glu39 lines the Mg(2+) pocket. Residue Asp43 is part of the active site. Positions 112 and 115 each coordinate Mg(2+). The active site involves Glu115. Positions 153 to 223 (DPKTRLQEYL…AEQILKVLDI (71 aa)) constitute a DRBM domain.

It belongs to the ribonuclease III family. Homodimer. Mg(2+) is required as a cofactor.

The protein localises to the cytoplasm. It catalyses the reaction Endonucleolytic cleavage to 5'-phosphomonoester.. Its function is as follows. Digests double-stranded RNA. Involved in the processing of primary rRNA transcript to yield the immediate precursors to the large and small rRNAs (23S and 16S). Processes some mRNAs, and tRNAs when they are encoded in the rRNA operon. Processes pre-crRNA and tracrRNA of type II CRISPR loci if present in the organism. This is Ribonuclease 3 from Actinobacillus succinogenes (strain ATCC 55618 / DSM 22257 / CCUG 43843 / 130Z).